A 388-amino-acid chain; its full sequence is Phosphopentomutase (388 aa).

Aspartate 11, aspartate 283, histidine 288, aspartate 324, histidine 325, and histidine 336 together coordinate Mn(2+).

Belongs to the phosphopentomutase family. It depends on Mn(2+) as a cofactor.

It is found in the cytoplasm. The enzyme catalyses 2-deoxy-alpha-D-ribose 1-phosphate = 2-deoxy-D-ribose 5-phosphate. It carries out the reaction alpha-D-ribose 1-phosphate = D-ribose 5-phosphate. Its pathway is carbohydrate degradation; 2-deoxy-D-ribose 1-phosphate degradation; D-glyceraldehyde 3-phosphate and acetaldehyde from 2-deoxy-alpha-D-ribose 1-phosphate: step 1/2. Functionally, isomerase that catalyzes the conversion of deoxy-ribose 1-phosphate (dRib-1-P) and ribose 1-phosphate (Rib-1-P) to deoxy-ribose 5-phosphate (dRib-5-P) and ribose 5-phosphate (Rib-5-P), respectively. The chain is Phosphopentomutase from Enterococcus faecalis (strain ATCC 700802 / V583).